The sequence spans 485 residues: Dynein axonemal assembly factor 3 (485 aa).

The protein belongs to the DNAAF3 family.

It localises to the cytoplasm. Its subcellular location is the dynein axonemal particle. Required for the assembly of axonemal inner and outer dynein arms. Involved in preassembly of dyneins into complexes before their transport into cilia. This is Dynein axonemal assembly factor 3 (dnaaf3) from Xenopus laevis (African clawed frog).